The chain runs to 147 residues: uncharacterized protein (147 aa).

Transmembrane regions (helical) follow at residues 35 to 55 (TIQL…FGNH) and 62 to 82 (IWLL…LFEP).

As to quaternary structure, has been detected in a cytochrome bc1-aa3 supercomplex; its deletion however leaves complex activity unaffected.

It localises to the cell membrane. This is an uncharacterized protein from Corynebacterium glutamicum (strain ATCC 13032 / DSM 20300 / JCM 1318 / BCRC 11384 / CCUG 27702 / LMG 3730 / NBRC 12168 / NCIMB 10025 / NRRL B-2784 / 534).